The sequence spans 349 residues: 26S proteasome non-ATPase regulatory subunit 4 (349 aa).

One can recognise a VWFA domain in the interval 5–188 (ATIVCLDNSE…LSDIILQSPI (184 aa)). The UIM 1 domain occupies 204 to 223 (DTDPDLAMALKLSLEEEKQR). Over residues 219 to 234 (EEKQRQERERKAREEA) the composition is skewed to basic and acidic residues. Disordered stretches follow at residues 219–257 (EEKQ…MDVN) and 274–349 (TDKM…NEKK). Residues 235–253 (NGGSTNSGTTTTTAPTESN) are compositionally biased toward low complexity. A UIM 2 domain is found at 259-278 (EDDPELAEALALSMATDKME). Residues 280–301 (QSSTTNTDSQPPQQQQQPPTDD) show a composition bias toward low complexity. Basic and acidic residues predominate over residues 335 to 349 (LSKKDEDKDKDNEKK).

It belongs to the proteasome subunit S5A family. In terms of assembly, the 26S proteasome is composed of a core protease, known as the 20S proteasome, capped at one or both ends by the 19S regulatory complex (RC). The RC is composed of at least 18 different subunits in two subcomplexes, the base and the lid, which form the portions proximal and distal to the 20S proteolytic core, respectively.

Binds and presumably selects ubiquitin-conjugates for destruction. The protein is 26S proteasome non-ATPase regulatory subunit 4 (psmD4) of Dictyostelium discoideum (Social amoeba).